Reading from the N-terminus, the 2313-residue chain is Serine/threonine-protein kinase smg-1 (2313 aa).

The segment covering 779–791 (NRKSSDKKPKSTT) has biased composition (basic and acidic residues). A disordered region spans residues 779 to 798 (NRKSSDKKPKSTTEDVPPPA). Positions 1045 to 1528 (ARERLQLVES…VFQVVSGAAS (484 aa)) constitute an FAT domain. One copy of the HEAT repeat lies at 1478 to 1514 (VHVWKEILPQLFARLSHPSDHIRKTLVDLISRVCTAA). The region spanning 1746 to 2091 (VADNVTILPT…DTIELFQLRV (346 aa)) is the PI3K/PI4K catalytic domain. The interval 1752–1758 (ILPTKTR) is G-loop. A catalytic loop region spans residues 1954 to 1962 (GLGDRHLDN). The activation loop stretch occupies residues 1974 to 1998 (HIDYNICFDKGKILRIPETVPFRLS). Positions 2281–2313 (RKLSPREEADVLIAEATSSANLAQMYEGWTAWV) constitute an FATC domain.

Belongs to the PI3/PI4-kinase family. In terms of assembly, component of a post-splicing multiprotein NMD complex. Requires Mn(2+) as cofactor.

Its subcellular location is the cytoplasm. It catalyses the reaction L-seryl-[protein] + ATP = O-phospho-L-seryl-[protein] + ADP + H(+). The enzyme catalyses L-threonyl-[protein] + ATP = O-phospho-L-threonyl-[protein] + ADP + H(+). Functionally, serine/threonine protein kinase involved in mRNA surveillance. Recognizes the substrate consensus sequence [ST]-Q. Involved in nonsense-mediated decay (NMD) of mRNAs containing premature stop codons by phosphorylating smg-2. In Caenorhabditis briggsae, this protein is Serine/threonine-protein kinase smg-1 (smg-1).